Here is a 925-residue protein sequence, read N- to C-terminus: Probable glycoprotein hormone G-protein coupled receptor (925 aa).

Positions 1-27 (MEDRGICPRVLQVLFLVVLILISPVYA) are cleaved as a signal peptide. Topologically, residues 28-529 (AKNDACTKCS…EDIMGYVWLT (502 aa)) are extracellular. A glycan (N-linked (GlcNAc...) asparagine) is linked at Asn61. LRR repeat units follow at residues 85 to 106 (KLKYLTLNNNKIKNIAKFRVKN), 110 to 131 (SLITLSYTHNIIETIENGAFDD), 134 to 155 (QLTQLDLSNNRLKEFPIFNKTS), 156 to 180 (SVTKLYLRGNPGITKLPRQSLGNLP), 181 to 202 (SLENLFMERTGIQEIPAGIFRQ), 203 to 224 (NTRLINLYFNKTKALERINEDA), 230 to 250 (SLKTLVLDETSVTSLPSRGLK), and 251 to 273 (NLHFLSLKDVPNFWQLPELDSIR). A glycan (N-linked (GlcNAc...) asparagine) is linked at Asn152. Asn212 carries an N-linked (GlcNAc...) asparagine glycan. The segment at 299–493 (TMQKPSTEEN…PTLIPHSNHT (195 aa)) is disordered. Positions 301-318 (QKPSTEENNGQTTASSPT) are enriched in polar residues. One copy of the 1; truncated repeat lies at 333–349 (STQPHTTSGFGGGGFPG). The interval 333–461 (STQPHTTSGF…PGGGGFPGGG (129 aa)) is 5 X approximate tandem repeats. A compositionally biased stretch (gly residues) spans 341-362 (GFGGGGFPGGGGGFPGGGGFPA). 3 repeat units span residues 350–384 (GGGGFPGGGGFPAGGSKTSTQPHTTSGFGGGGFPG), 385–419 (GGGGFPGGGGFPAGGSKTSTQPHTTSGFGGGGFPG), and 420–453 (GGGGFPGGGGFPGGSNTSTQPHTTSNSGGGGFPG). Polar residues predominate over residues 365–375 (SKTSTQPHTTS). Positions 376-397 (GFGGGGFPGGGGGFPGGGGFPA) are enriched in gly residues. Residues 400-410 (SKTSTQPHTTS) are compositionally biased toward polar residues. A compositionally biased stretch (gly residues) spans 411-432 (GFGGGGFPGGGGGFPGGGGFPG). Residues 434 to 445 (SNTSTQPHTTSN) are compositionally biased toward polar residues. Asn435 carries N-linked (GlcNAc...) asparagine glycosylation. Over residues 446–462 (SGGGGFPGGGGFPGGGT) the composition is skewed to gly residues. The stretch at 454-461 (GGGFPGGG) is one 5; truncated repeat. Polar residues predominate over residues 476–493 (VHQSTADPPTLIPHSNHT). N-linked (GlcNAc...) asparagine glycosylation is present at Asn495. Residues 530-551 (VVSFMVGAVALVANLVVALVLL) traverse the membrane as a helical segment. At 552-561 (TSQRRLNVTR) the chain is on the cytoplasmic side. The chain crosses the membrane as a helical span at residues 562–584 (FLMCNLAFADFILGLYIFILTSV). At 585–606 (SAVTRGDYHNYVQQWQNGAGCK) the chain is on the extracellular side. The chain crosses the membrane as a helical span at residues 607–628 (ILGFLAVFSSELSLFTLVMMTI). At 629 to 651 (ERFYAIVHAMHMNARLSFRKTVR) the chain is on the cytoplasmic side. A helical transmembrane segment spans residues 652–673 (FMIGGWIFALVMAVVPLTGVSG). The Extracellular portion of the chain corresponds to 674 to 691 (YSKVAICLPFDVSDATST). The helical transmembrane segment at 692–712 (AYVAFLLLVNGASFISVMYLY) threads the bilayer. Topologically, residues 713 to 739 (SRMLYVVVSGGDMEGAPKRNDSKVAKR) are cytoplasmic. A helical transmembrane segment spans residues 740–763 (MAILVFTDMLCWAPIAFFGLLAAF). Topologically, residues 764 to 774 (GQTLLTVTQSK) are extracellular. A helical transmembrane segment spans residues 775 to 795 (ILLVFFFPINSICNPFLYAFF). At 796–925 (TKAFKRELFT…QKQKILQSPS (130 aa)) the chain is on the cytoplasmic side. Residues 904–925 (VTKSSSPPHLKLQKQKILQSPS) form a disordered region.

It belongs to the G-protein coupled receptor 1 family. FSH/LSH/TSH subfamily.

The protein localises to the cell membrane. Its function is as follows. Probable receptor for a glycoprotein hormone. The polypeptide is Probable glycoprotein hormone G-protein coupled receptor (Anthopleura elegantissima (Green aggregating anemone)).